The chain runs to 290 residues: ATP synthase gamma chain (290 aa).

It belongs to the ATPase gamma chain family. F-type ATPases have 2 components, CF(1) - the catalytic core - and CF(0) - the membrane proton channel. CF(1) has five subunits: alpha(3), beta(3), gamma(1), delta(1), epsilon(1). CF(0) has three main subunits: a, b and c.

It is found in the cell inner membrane. Produces ATP from ADP in the presence of a proton gradient across the membrane. The gamma chain is believed to be important in regulating ATPase activity and the flow of protons through the CF(0) complex. The polypeptide is ATP synthase gamma chain (Bacteroides fragilis (strain YCH46)).